We begin with the raw amino-acid sequence, 121 residues long: Protransforming growth factor alpha (121 aa).

Residue leucine 1 is a signal peptide. Positions 2-16 (ENSTSLLSDPPVAAA) are cleaved as a propeptide — removed in mature form. Over 2 to 75 (ENSTSLLSDP…AVVAASQKKQ (74 aa)) the chain is Extracellular. Asparagine 3 is a glycosylation site (N-linked (GlcNAc...) asparagine). Residues 20-60 (HFNDCPDSHTQFCFHGTCRFLVQEDRPACVCHSGYVGARCE) form the EGF-like domain. Disulfide bonds link cysteine 24–cysteine 37, cysteine 32–cysteine 48, and cysteine 50–cysteine 59. The propeptide at 67–121 (VVAASQKKQAITALVVVSIVALAVLIITCVLIHCCQVRKHCEWCRALICRHEKPS) is removed in mature form. A helical membrane pass occupies residues 76 to 101 (AITALVVVSIVALAVLIITCVLIHCC).

In terms of assembly, interacts with the PDZ domains of MAGI3, SDCBP and SNTA1. The interaction with SDCBP, is required for the targeting to the cell surface. In the endoplasmic reticulum, in its immature form (i.e. with a prosegment and lacking full N-glycosylation), interacts with CNIH. In the Golgi apparatus, may form a complex with CNIH and GORASP2. Interacts (via cytoplasmic C-terminal domain) with NKD2. Hypothalamus.

Its subcellular location is the secreted. The protein localises to the extracellular space. It is found in the cell membrane. In terms of biological role, TGF alpha is a mitogenic polypeptide that is able to bind to the EGF receptor/EGFR and to act synergistically with TGF beta to promote anchorage-independent cell proliferation in soft agar. This is Protransforming growth factor alpha (TGFA) from Macaca mulatta (Rhesus macaque).